Reading from the N-terminus, the 299-residue chain is NADH-cytochrome b5 reductase 2 (299 aa).

The helical transmembrane segment at 13-35 threads the bilayer; sequence SFKVLAPFAAAVGSVGIAYQYST. Residues 50 to 154 form the FAD-binding FR-type domain; that stretch reads DEWIDLKLAK…KGPVVKWKWE (105 aa). An FAD-binding site is contributed by 157–192; the sequence is QYKSIALIGGGTGITPLYQLMHEITKNPEDKTKVNL.

The protein belongs to the flavoprotein pyridine nucleotide cytochrome reductase family. Requires FAD as cofactor.

It localises to the mitochondrion outer membrane. The catalysed reaction is 2 Fe(III)-[cytochrome b5] + NADH = 2 Fe(II)-[cytochrome b5] + NAD(+) + H(+). Its function is as follows. May mediate the reduction of outer membrane cytochrome b5. The polypeptide is NADH-cytochrome b5 reductase 2 (MCR1) (Debaryomyces hansenii (strain ATCC 36239 / CBS 767 / BCRC 21394 / JCM 1990 / NBRC 0083 / IGC 2968) (Yeast)).